Here is a 599-residue protein sequence, read N- to C-terminus: Serine hydroxymethyltransferase 6 (599 aa).

Positions 1-25 (MDRIAQSDLSLGFGSSHALPLPHPP) are disordered. Lys-374 is subject to N6-(pyridoxal phosphate)lysine.

The protein belongs to the SHMT family. As to quaternary structure, homotetramer. Pyridoxal 5'-phosphate is required as a cofactor.

It localises to the cytoplasm. The enzyme catalyses (6R)-5,10-methylene-5,6,7,8-tetrahydrofolate + glycine + H2O = (6S)-5,6,7,8-tetrahydrofolate + L-serine. The protein operates within one-carbon metabolism; tetrahydrofolate interconversion. Catalyzes the interconversion of serine and glycine. This chain is Serine hydroxymethyltransferase 6 (SHM6), found in Arabidopsis thaliana (Mouse-ear cress).